The sequence spans 216 residues: Thiopurine S-methyltransferase (216 aa).

The S-adenosyl-L-methionine site is built by tryptophan 10, leucine 45, glutamate 66, and arginine 123.

The protein belongs to the class I-like SAM-binding methyltransferase superfamily. TPMT family.

It is found in the cytoplasm. It carries out the reaction S-adenosyl-L-methionine + a thiopurine = S-adenosyl-L-homocysteine + a thiopurine S-methylether.. In Pseudomonas entomophila (strain L48), this protein is Thiopurine S-methyltransferase.